The sequence spans 517 residues: Putative succinate-semialdehyde dehydrogenase [NADP(+)] (517 aa).

NADP(+)-binding positions include 157–158 (WN), 181–184 (KPDS), and 232–233 (GS). Residue Glu-254 is the Proton acceptor of the active site. Position 255 (Leu-255) interacts with NADP(+). The Nucleophile role is filled by Cys-288. Glu-386 provides a ligand contact to NADP(+).

This sequence belongs to the aldehyde dehydrogenase family.

It catalyses the reaction succinate semialdehyde + NADP(+) + H2O = succinate + NADPH + 2 H(+). Its function is as follows. Catalyzes the NADP(+)-dependent oxidation of succinate semialdehyde to succinate. Although it has succinate semialdehyde dehydrogenase activity, is likely to act physiologically on a different aldehyde(s). The sequence is that of Putative succinate-semialdehyde dehydrogenase [NADP(+)] (gabD2) from Mycolicibacterium smegmatis (strain ATCC 700084 / mc(2)155) (Mycobacterium smegmatis).